A 1407-amino-acid chain; its full sequence is Adenylate cyclase, aggregation specific (1407 aa).

Residues Met-1–Ser-219 lie on the Cytoplasmic side of the membrane. The segment at Asn-28–Leu-131 is disordered. Positions Leu-51–Asn-63 are enriched in polar residues. Residues Asn-64–His-75 show a composition bias toward gly residues. Composition is skewed to low complexity over residues His-80 to His-90 and Pro-98 to Ser-115. A run of 6 helical transmembrane segments spans residues Gln-220–Thr-240, Ile-244–Leu-264, Leu-276–Tyr-296, Ile-304–Ile-324, Trp-325–Ser-345, and Ile-353–Leu-373. Over Glu-374 to Glu-962 the chain is Cytoplasmic. Residues Ser-438 to Glu-661 form the Guanylate cyclase 1 domain. Residues Asp-443, Ile-444, and Asp-488 each coordinate Mg(2+). 3 disordered regions span residues Ala-502–Glu-590, Lys-751–Glu-799, and Asn-828–Phe-876. Composition is skewed to low complexity over residues Gln-505–Ile-526, Asn-535–Gly-581, and Ser-752–Ser-795. A compositionally biased stretch (polar residues) spans Asn-828–Val-846. A compositionally biased stretch (low complexity) spans Asn-847–Asn-871. Transmembrane regions (helical) follow at residues Thr-963–Leu-979, Ser-992–Thr-1012, Pro-1018–Leu-1038, Leu-1071–Ile-1091, and Ile-1105–Met-1125. In terms of domain architecture, Guanylate cyclase 2 spans Ser-1189–Gln-1311. The chain crosses the membrane as a helical span at residues Ala-1378 to Phe-1398. Residues Thr-1399 to Ser-1407 lie on the Cytoplasmic side of the membrane.

Belongs to the adenylyl cyclase class-4/guanylyl cyclase family. Requires Mg(2+) as cofactor. Expressed throughout the structure in the tipped mound and finger. Expressed primarily in the prestalk region of the slug. In the early culminant expression is increased in the posterior prespore and anterior-most regions and expands into the developing stalk. In the mid and late culminant it is expressed throughout the stalk.

It localises to the membrane. Its subcellular location is the cell projection. It is found in the uropodium. The catalysed reaction is ATP = 3',5'-cyclic AMP + diphosphate. Its activity is regulated as follows. Regulated by cyclic AMP receptor 1 through a guanine nucleotide binding protein and protein CRAC. Both positively and negatively regulated by extracellular cAMP; this regulation is part of the mechanism that establishes the oscillatory cAMP waves during aggregation. Its function is as follows. Coordinates cell aggregation by synthesizing the cAMP that influences differentiation and morphogenesis of cells within a developing multicellular structure. The protein is Adenylate cyclase, aggregation specific (acaA) of Dictyostelium discoideum (Social amoeba).